The sequence spans 183 residues: ATP synthase subunit delta (183 aa).

The protein belongs to the ATPase delta chain family. F-type ATPases have 2 components, F(1) - the catalytic core - and F(0) - the membrane proton channel. F(1) has five subunits: alpha(3), beta(3), gamma(1), delta(1), epsilon(1). F(0) has three main subunits: a(1), b(2) and c(10-14). The alpha and beta chains form an alternating ring which encloses part of the gamma chain. F(1) is attached to F(0) by a central stalk formed by the gamma and epsilon chains, while a peripheral stalk is formed by the delta and b chains.

Its subcellular location is the cell membrane. Its function is as follows. F(1)F(0) ATP synthase produces ATP from ADP in the presence of a proton or sodium gradient. F-type ATPases consist of two structural domains, F(1) containing the extramembraneous catalytic core and F(0) containing the membrane proton channel, linked together by a central stalk and a peripheral stalk. During catalysis, ATP synthesis in the catalytic domain of F(1) is coupled via a rotary mechanism of the central stalk subunits to proton translocation. This protein is part of the stalk that links CF(0) to CF(1). It either transmits conformational changes from CF(0) to CF(1) or is implicated in proton conduction. This chain is ATP synthase subunit delta, found in Mesoplasma florum (strain ATCC 33453 / NBRC 100688 / NCTC 11704 / L1) (Acholeplasma florum).